A 380-amino-acid polypeptide reads, in one-letter code: Ubiquitin-like protein 7 (380 aa).

Residues 18–98 (APKSILQLPE…VLRKSWPEPD (81 aa)) enclose the Ubiquitin-like domain. Positions 200 to 313 (TPMPGADSSS…SSGVQSGTPI (114 aa)) are disordered. A compositionally biased stretch (low complexity) spans 206–221 (DSSSRSMPSSSYRDMP). A Phosphoserine modification is found at serine 230. Low complexity-rich tracts occupy residues 239 to 253 (STRSTPSSSTPSSRP) and 270 to 293 (SELATALALASTPESSSHTPTPGT). Residues 294-313 (QGHSSGTSPMSSGVQSGTPI) show a composition bias toward polar residues. The UBA domain occupies 333–377 (SLQIQWQPQLQQLRDMGIQDDELSLRALQATGGDIQAALELIFAG).

As to quaternary structure, binds ubiquitin. Interacts with MAVS; this interaction enhances TRIM21-dependent 'Lys-27'-linked polyubiquitination of MAVS. In terms of processing, deubiquitinated by OTUD4 which stabilizes UBL7 expression.

Its function is as follows. Interferon-stimulated protein that positively regulates RNA virus-triggered innate immune signaling. Mechanistically, promotes 'Lys-27'-linked polyubiquitination of MAVS through TRIM21 leading to enhanced the IFN signaling pathway. This chain is Ubiquitin-like protein 7 (Ubl7), found in Mus musculus (Mouse).